A 303-amino-acid polypeptide reads, in one-letter code: Acetyl-coenzyme A carboxylase carboxyl transferase subunit beta (303 aa).

Residues 29-298 (LWVKCPETGQ…ATPAPASAAA (270 aa)) enclose the CoA carboxyltransferase N-terminal domain.

This sequence belongs to the AccD/PCCB family. As to quaternary structure, acetyl-CoA carboxylase is a heterohexamer composed of biotin carboxyl carrier protein (AccB), biotin carboxylase (AccC) and two subunits each of ACCase subunit alpha (AccA) and ACCase subunit beta (AccD).

The protein resides in the cytoplasm. The catalysed reaction is N(6)-carboxybiotinyl-L-lysyl-[protein] + acetyl-CoA = N(6)-biotinyl-L-lysyl-[protein] + malonyl-CoA. The protein operates within lipid metabolism; malonyl-CoA biosynthesis; malonyl-CoA from acetyl-CoA: step 1/1. Its function is as follows. Component of the acetyl coenzyme A carboxylase (ACC) complex. Biotin carboxylase (BC) catalyzes the carboxylation of biotin on its carrier protein (BCCP) and then the CO(2) group is transferred by the transcarboxylase to acetyl-CoA to form malonyl-CoA. The sequence is that of Acetyl-coenzyme A carboxylase carboxyl transferase subunit beta from Methylobacterium sp. (strain 4-46).